Consider the following 229-residue polypeptide: 5'-methylthioadenosine/S-adenosylhomocysteine nucleosidase (229 aa).

The Proton acceptor role is filled by Glu-12. Substrate contacts are provided by residues Gly-78, Ile-152, and 173 to 174; that span reads ME. Asp-197 functions as the Proton donor in the catalytic mechanism.

It belongs to the PNP/UDP phosphorylase family. MtnN subfamily.

It catalyses the reaction S-adenosyl-L-homocysteine + H2O = S-(5-deoxy-D-ribos-5-yl)-L-homocysteine + adenine. The enzyme catalyses S-methyl-5'-thioadenosine + H2O = 5-(methylsulfanyl)-D-ribose + adenine. The catalysed reaction is 5'-deoxyadenosine + H2O = 5-deoxy-D-ribose + adenine. It functions in the pathway amino-acid biosynthesis; L-methionine biosynthesis via salvage pathway; S-methyl-5-thio-alpha-D-ribose 1-phosphate from S-methyl-5'-thioadenosine (hydrolase route): step 1/2. Its function is as follows. Catalyzes the irreversible cleavage of the glycosidic bond in both 5'-methylthioadenosine (MTA) and S-adenosylhomocysteine (SAH/AdoHcy) to adenine and the corresponding thioribose, 5'-methylthioribose and S-ribosylhomocysteine, respectively. Also cleaves 5'-deoxyadenosine, a toxic by-product of radical S-adenosylmethionine (SAM) enzymes, into 5-deoxyribose and adenine. The sequence is that of 5'-methylthioadenosine/S-adenosylhomocysteine nucleosidase from Histophilus somni (strain 129Pt) (Haemophilus somnus).